The primary structure comprises 358 residues: Protein RecA (358 aa).

Position 76–83 (76–83 (GPESSGKT)) interacts with ATP.

The protein belongs to the RecA family.

It localises to the cytoplasm. Functionally, can catalyze the hydrolysis of ATP in the presence of single-stranded DNA, the ATP-dependent uptake of single-stranded DNA by duplex DNA, and the ATP-dependent hybridization of homologous single-stranded DNAs. It interacts with LexA causing its activation and leading to its autocatalytic cleavage. The chain is Protein RecA from Rhodospirillum centenum (strain ATCC 51521 / SW).